Reading from the N-terminus, the 157-residue chain is Cyclic pyranopterin monophosphate synthase (157 aa).

Substrate is bound by residues 74 to 76 and 112 to 113; these read MCH and ME. Residue Asp127 is part of the active site.

It belongs to the MoaC family. In terms of assembly, homohexamer; trimer of dimers.

The catalysed reaction is (8S)-3',8-cyclo-7,8-dihydroguanosine 5'-triphosphate = cyclic pyranopterin phosphate + diphosphate. The protein operates within cofactor biosynthesis; molybdopterin biosynthesis. Functionally, catalyzes the conversion of (8S)-3',8-cyclo-7,8-dihydroguanosine 5'-triphosphate to cyclic pyranopterin monophosphate (cPMP). In Campylobacter jejuni (strain RM1221), this protein is Cyclic pyranopterin monophosphate synthase.